Here is a 552-residue protein sequence, read N- to C-terminus: Glutamine--tRNA ligase (552 aa).

Residues 34–44 carry the 'HIGH' region motif; the sequence is PEPNGYLHIGH. ATP contacts are provided by residues 35–37 and 41–47; these read EPN and HIGHAKS. Positions 67 and 212 each coordinate L-glutamine. ATP is bound by residues T231, 261–262, and 269–271; these read RL and MSK. The short motif at 268 to 272 is the 'KMSKS' region element; the sequence is IMSKR.

The protein belongs to the class-I aminoacyl-tRNA synthetase family. As to quaternary structure, monomer.

It is found in the cytoplasm. It catalyses the reaction tRNA(Gln) + L-glutamine + ATP = L-glutaminyl-tRNA(Gln) + AMP + diphosphate. This Pectobacterium atrosepticum (strain SCRI 1043 / ATCC BAA-672) (Erwinia carotovora subsp. atroseptica) protein is Glutamine--tRNA ligase.